Consider the following 59-residue polypeptide: KDGYPVDSKGCKLSCVANNYCDNQCKMKKASGGHCYAMSCYCEGLPENAKVSDSATNIC.

The LCN-type CS-alpha/beta domain occupies 1–59 (KDGYPVDSKGCKLSCVANNYCDNQCKMKKASGGHCYAMSCYCEGLPENAKVSDSATNIC). Intrachain disulfides connect C11/C59, C15/C35, C21/C40, and C25/C42.

Belongs to the long (4 C-C) scorpion toxin superfamily. Sodium channel inhibitor family. In terms of tissue distribution, expressed by the venom gland.

The protein resides in the secreted. Functionally, binds voltage-independently sodium channels (Nav) and inhibits the inactivation of the activated channels, thereby blocking neuronal transmission. Is highly toxic to insects and barely toxic to mammals. As it does not compete with the classical alpha-toxin AaH2, this toxin is considered as an alpha-like toxin. This chain is Alpha-like toxin CsEv5, found in Centruroides sculpturatus (Arizona bark scorpion).